A 92-amino-acid chain; its full sequence is Small ribosomal subunit protein uS19 (92 aa).

It belongs to the universal ribosomal protein uS19 family.

Protein S19 forms a complex with S13 that binds strongly to the 16S ribosomal RNA. This is Small ribosomal subunit protein uS19 from Oceanobacillus iheyensis (strain DSM 14371 / CIP 107618 / JCM 11309 / KCTC 3954 / HTE831).